Here is a 138-residue protein sequence, read N- to C-terminus: Glia maturation factor (138 aa).

The 136-residue stretch at 3 to 138 folds into the ADF-H domain; that stretch reads DNQICDISNE…TEEWLKAKLK (136 aa).

This sequence belongs to the actin-binding proteins ADF family. GMF subfamily. In ovaries, expressed in follicular epithelium, in polar cells, migrating border cells, and centripedal cells (at protein level).

It is found in the cell projection. It localises to the lamellipodium. The protein localises to the cytoplasm. The protein resides in the perinuclear region. Its subcellular location is the nucleus. It is found in the cell cortex. Functionally, inhibits Arp2/3-mediated actin nucleation. Together with flr, promotes Arp2/3-nucleated actin filament array disassembly. Promotes debranching. Regulates lamellipodial protrusion dynamics possibly by facilitating lamellipodial retraction. In egg chambers, enhances the retraction dynamics of cellular extensions in border cells and thus together with flr plays an important role in directional migration of border cell clusters. This Drosophila melanogaster (Fruit fly) protein is Glia maturation factor.